Reading from the N-terminus, the 264-residue chain is Taurine import ATP-binding protein TauB (264 aa).

One can recognise an ABC transporter domain in the interval 4–233; sequence LQLERISAQY…RYAAGESARA (230 aa). 38-45 lines the ATP pocket; it reads GPSGSGKT.

Belongs to the ABC transporter superfamily. Taurine importer (TC 3.A.1.17.1) family. The complex is composed of two ATP-binding proteins (TauB), two transmembrane proteins (TauC) and a solute-binding protein (TauA).

It localises to the cell inner membrane. The enzyme catalyses taurine(out) + ATP + H2O = taurine(in) + ADP + phosphate + H(+). Its function is as follows. Part of the ABC transporter complex TauABC involved in taurine import. Responsible for energy coupling to the transport system. The sequence is that of Taurine import ATP-binding protein TauB from Pseudomonas fluorescens (strain Pf0-1).